Consider the following 528-residue polypeptide: Peptide chain release factor 3 (528 aa).

A tr-type G domain is found at 10-278 (DRRRTFGIIS…AFVQMAPPPH (269 aa)). Residues 19-26 (SHPDAGKT), 87-91 (DTPGH), and 141-144 (NKLD) contribute to the GTP site.

Belongs to the TRAFAC class translation factor GTPase superfamily. Classic translation factor GTPase family. PrfC subfamily.

The protein localises to the cytoplasm. In terms of biological role, increases the formation of ribosomal termination complexes and stimulates activities of RF-1 and RF-2. It binds guanine nucleotides and has strong preference for UGA stop codons. It may interact directly with the ribosome. The stimulation of RF-1 and RF-2 is significantly reduced by GTP and GDP, but not by GMP. The sequence is that of Peptide chain release factor 3 from Syntrophobacter fumaroxidans (strain DSM 10017 / MPOB).